Here is a 585-residue protein sequence, read N- to C-terminus: Epithelial sodium channel subunit gamma (585 aa).

Residues 1-55 are Cytoplasmic-facing; that stretch reads MAPGEKIKAKIKKNLPVTGPQAPTIKELMRWYCLNTNTHGCRRIVVSRGRLRRLL. The chain crosses the membrane as a helical span at residues 56 to 76; it reads WIGFTLTAVALILWQCALLVF. At 77–477 the chain is on the extracellular side; the sequence is SFYTVSVSIK…GGQLGLWMSC (401 aa). 6 disulfide bridges follow: Cys100/Cys219, Cys308/Cys393, Cys330/Cys389, Cys334/Cys385, Cys343/Cys370, and Cys345/Cys359. N-linked (GlcNAc...) asparagine glycosylation occurs at Asn207. Asn433 carries an N-linked (GlcNAc...) asparagine glycan. The chain crosses the membrane as a helical span at residues 478–498; it reads SVVCVIEIIEVFFIDFFSIIA. At 499–585 the chain is on the cytoplasmic side; the sequence is RRQWQKAKEW…LTDTQMLDEL (87 aa). Residues 513–534 form a disordered region; that stretch reads QAPPCPEAPRSPQGQDNPALDI. The PY motif; recruits WW domain-containing proteins and is thereby required for ubiquitination and inhibition of the channel by NEDD4 and NEDD4L motif lies at 559–563; sequence PPPKY.

This sequence belongs to the amiloride-sensitive sodium channel (TC 1.A.6) family. SCNN1G subfamily. In terms of assembly, component of the heterotrimeric epithelial sodium channel (ENaC) composed of an alpha/SCNN1A, a beta/SCNN1B and a gamma/SCNN1G subunit. An additional delta/SCNN1D subunit can replace the alpha/SCNN1A subunit to form an alternative channel with specific properties. Interacts with WWP1 (via WW domains). Interacts with WWP2 (via WW domains); inhibits the channel. Interacts with the full-length immature form of PCSK9 (pro-PCSK9); inhibits ENaC by promoting its proteasomal degradation. Interacts with BPIFA1; the interaction is indirect via SCNN1B and inhibits the proteolytic maturation of SCNN1A and SCNN1G and the activation of ENaC. Post-translationally, phosphorylated on serine and threonine residues. Aldosterone and insulin increase the basal level of phosphorylation. Ubiquitinated. Can be ubiquitinated at multiple sites and undergo monoubiquitination and polyubiquitination. Ubiquitination by NEDD4 or NEDD4L inhibits the ENaC channel through endocytosis, intracellular retention and degradation of its individual subunits. In terms of processing, ENaC is activated through the proteolytic maturation of its subunits. Furin cleaves the SCNN1G subunit first, followed by cleavage by prostasin (PRSS8), which results in a stepwise increase in the open probability of the channel due to the release of an inhibitory tract. BPIFA1, which is recruited by the SCNN1B subunit, prevents the proteolytic activation of ENaC. Post-translationally, N-glycosylated. N-linked glycans are processed to complex type during ENaC complex assembly and transport to the plasma membrane.

It localises to the apical cell membrane. It carries out the reaction Na(+)(in) = Na(+)(out). Originally identified and characterized by its inhibition by the diuretic drug amiloride. In terms of biological role, this is one of the three pore-forming subunits of the heterotrimeric epithelial sodium channel (ENaC), a critical regulator of sodium balance and fluid homeostasis. ENaC operates in epithelial tissues, where it mediates the electrodiffusion of sodium ions from extracellular fluid through the apical membrane of cells, with water following osmotically. It plays a key role in maintaining sodium homeostasis through electrogenic sodium reabsorption in the kidneys. Additionally, ENaC is essential for airway surface liquid homeostasis, which is crucial for proper mucus clearance. The chain is Epithelial sodium channel subunit gamma from Pan troglodytes (Chimpanzee).